We begin with the raw amino-acid sequence, 145 residues long: Immune protein Tsi3 (145 aa).

The first 15 residues, 1–15, serve as a signal peptide directing secretion; sequence MKTVALILASLALLA. C16 carries N-palmitoyl cysteine lipidation. The S-diacylglycerol cysteine moiety is linked to residue C16. Residues 53 to 85 form a disordered region; it reads FDEGGKLRNPRQLEVQRQDAPPPPDLASRRLGD. Ca(2+) is bound at residue E126.

As to quaternary structure, forms a heterotetramer with Tse3 consisting of two Tse3 dimers and two Tsi3 dimers. Formation of the complex inactivates Tse3 enzymatic activity.

In terms of biological role, immunity protein that plays a role in preventing early activation of toxin Tse3. Occupies Tse3 substrate binding site and prevents the substrate from entering. This chain is Immune protein Tsi3, found in Pseudomonas aeruginosa (strain ATCC 15692 / DSM 22644 / CIP 104116 / JCM 14847 / LMG 12228 / 1C / PRS 101 / PAO1).